A 657-amino-acid chain; its full sequence is Endoplasmic reticulum chaperone BiP homolog (657 aa).

Positions methionine 1–cysteine 17 are cleaved as a signal peptide. ATP-binding positions include glycine 38 to tyrosine 41, lysine 99, glycine 229 to threonine 231, glutamate 295 to serine 302, and glycine 366 to arginine 369. The tract at residues lysine 128–lysine 282 is nucleotide-binding (NBD). Residues valine 402 to threonine 502 form a substrate-binding (SBD) region. Positions leucine 607–leucine 657 are disordered. Residues glutamate 616–glutamate 626 show a composition bias toward basic and acidic residues. A compositionally biased stretch (acidic residues) spans alanine 646–leucine 657. Positions histidine 654–leucine 657 match the Prevents secretion from ER motif.

The protein belongs to the heat shock protein 70 family.

The protein resides in the endoplasmic reticulum lumen. The catalysed reaction is ATP + H2O = ADP + phosphate + H(+). Its activity is regulated as follows. The chaperone activity is regulated by ATP-induced allosteric coupling of the nucleotide-binding (NBD) and substrate-binding (SBD) domains. In the ADP-bound and nucleotide-free (apo) states, the two domains have little interaction. In contrast, in the ATP-bound state the two domains are tightly coupled, which results in drastically accelerated kinetics in both binding and release of polypeptide substrates. J domain-containing co-chaperones stimulate the ATPase activity and are required for efficient substrate recognition. Its function is as follows. Endoplasmic reticulum chaperone that plays a key role in protein folding and quality control in the endoplasmic reticulum lumen. Required for ER dynamics during the first embryonic cell divisions. Specifically, controls ER transition into sheet-like structures at the onset of mitosis, possibly by regulating homotypic membrane fusion. This chain is Endoplasmic reticulum chaperone BiP homolog (hsp-4), found in Caenorhabditis elegans.